Here is a 236-residue protein sequence, read N- to C-terminus: Uridylate kinase (236 aa).

10–13 (KLSG) contacts ATP. G52 provides a ligand contact to UMP. G53 and R57 together coordinate ATP. UMP contacts are provided by residues D72 and 133 to 140 (TGNPFFTT). ATP contacts are provided by T160, Y166, and D169.

Belongs to the UMP kinase family. As to quaternary structure, homohexamer.

It is found in the cytoplasm. It catalyses the reaction UMP + ATP = UDP + ADP. The protein operates within pyrimidine metabolism; CTP biosynthesis via de novo pathway; UDP from UMP (UMPK route): step 1/1. Its activity is regulated as follows. Inhibited by UTP. Functionally, catalyzes the reversible phosphorylation of UMP to UDP. The sequence is that of Uridylate kinase from Cupriavidus necator (strain ATCC 17699 / DSM 428 / KCTC 22496 / NCIMB 10442 / H16 / Stanier 337) (Ralstonia eutropha).